The primary structure comprises 179 residues: Large ribosomal subunit protein uL22c (179 aa).

Belongs to the universal ribosomal protein uL22 family. In terms of assembly, part of the 50S ribosomal subunit.

The protein localises to the plastid. It localises to the chloroplast. Its function is as follows. This protein binds specifically to 23S rRNA. The globular domain of the protein is located near the polypeptide exit tunnel on the outside of the subunit, while an extended beta-hairpin is found that lines the wall of the exit tunnel in the center of the 70S ribosome. The sequence is that of Large ribosomal subunit protein uL22c (rpl22) from Ranunculus macranthus (Large buttercup).